The primary structure comprises 150 residues: 6,7-dimethyl-8-ribityllumazine synthase (150 aa).

Residues Phe-11, 43–45 (VYD), and 67–69 (AVI) contribute to the 5-amino-6-(D-ribitylamino)uracil site. (2S)-2-hydroxy-3-oxobutyl phosphate is bound at residue 72-73 (AT). His-75 (proton donor) is an active-site residue. Leu-100 lines the 5-amino-6-(D-ribitylamino)uracil pocket. Residue Arg-115 participates in (2S)-2-hydroxy-3-oxobutyl phosphate binding.

It belongs to the DMRL synthase family.

It carries out the reaction (2S)-2-hydroxy-3-oxobutyl phosphate + 5-amino-6-(D-ribitylamino)uracil = 6,7-dimethyl-8-(1-D-ribityl)lumazine + phosphate + 2 H2O + H(+). It functions in the pathway cofactor biosynthesis; riboflavin biosynthesis; riboflavin from 2-hydroxy-3-oxobutyl phosphate and 5-amino-6-(D-ribitylamino)uracil: step 1/2. Its function is as follows. Catalyzes the formation of 6,7-dimethyl-8-ribityllumazine by condensation of 5-amino-6-(D-ribitylamino)uracil with 3,4-dihydroxy-2-butanone 4-phosphate. This is the penultimate step in the biosynthesis of riboflavin. The sequence is that of 6,7-dimethyl-8-ribityllumazine synthase from Pyrobaculum arsenaticum (strain DSM 13514 / JCM 11321 / PZ6).